Consider the following 156-residue polypeptide: Ribosomal RNA large subunit methyltransferase H (156 aa).

Residues Leu73, Gly104, and 123-128 contribute to the S-adenosyl-L-methionine site; that span reads LSSLTL.

The protein belongs to the RNA methyltransferase RlmH family. In terms of assembly, homodimer.

Its subcellular location is the cytoplasm. It carries out the reaction pseudouridine(1915) in 23S rRNA + S-adenosyl-L-methionine = N(3)-methylpseudouridine(1915) in 23S rRNA + S-adenosyl-L-homocysteine + H(+). Specifically methylates the pseudouridine at position 1915 (m3Psi1915) in 23S rRNA. This Bordetella petrii (strain ATCC BAA-461 / DSM 12804 / CCUG 43448) protein is Ribosomal RNA large subunit methyltransferase H.